We begin with the raw amino-acid sequence, 460 residues long: Homocitrate synthase (460 aa).

The Pyruvate carboxyltransferase domain occupies 3 to 258; it reads VGILDSTLRE…IEVVKLNKLQ (256 aa). Residue Arg-11 participates in 2-oxoglutarate binding. Glu-12 lines the Mg(2+) pocket. 2-oxoglutarate-binding residues include His-75, Arg-135, and Thr-169. Residues His-197 and His-199 each coordinate Mg(2+). His-291 serves as the catalytic Proton acceptor.

The protein belongs to the alpha-IPM synthase/homocitrate synthase family. Homocitrate synthase LYS20/LYS21 subfamily. As to quaternary structure, forms a homotetramer in the absence of lysine, and is in hexadecamer-octamer equilibrium in the presence of lysine. Requires Mg(2+) as cofactor. It depends on Mn(2+) as a cofactor.

The enzyme catalyses acetyl-CoA + 2-oxoglutarate + H2O = (2R)-homocitrate + CoA + H(+). It participates in amino-acid biosynthesis; L-lysine biosynthesis via AAA pathway; L-alpha-aminoadipate from 2-oxoglutarate: step 1/5. Inhibited by lysine. In terms of biological role, catalyzes the aldol-type condensation of 2-oxoglutarate with acetyl-CoA to yield homocitrate. Carries out the first step of the alpha-aminoadipate (AAA) lysine biosynthesis pathway. In Sulfurisphaera tokodaii (strain DSM 16993 / JCM 10545 / NBRC 100140 / 7) (Sulfolobus tokodaii), this protein is Homocitrate synthase.